Reading from the N-terminus, the 563-residue chain is Beta-catenin-like protein 1 (563 aa).

The residue at position 1 (Met-1) is an N-acetylmethionine. The interval 1–49 (MDVGELLSYQPNRGTKRPRDDEEEEQKMRRKQTGTRERGRYREEEMTVV) is disordered. The Nuclear localization signal signature appears at 16–33 (KRPRDDEEEEQKMRRKQT). A compositionally biased stretch (basic and acidic residues) spans 34 to 45 (GTRERGRYREEE). HEAT repeat units lie at residues 79–129 (ESSV…VVAT) and 134–176 (YHLL…TLHE). An N6-acetyllysine modification is found at Lys-91. The Nuclear export signal (NES) signature appears at 130–140 (MPDLYHLLVEL). ARM repeat units lie at residues 178–228 (EEGA…MAEF), 229–273 (RPEM…LQDN), 274–323 (DENR…CLML), 325–363 (SNRERFLKGEGLQLMNLMLREKKISRSSALKVLDHAMIG), and 364–417 (PEGT…LLRN). Ser-389 is subject to Phosphoserine. A coiled-coil region spans residues 476–540 (DTEEEFYLRR…HIIKEYAENI (65 aa)). A Phosphoserine modification is found at Ser-545.

Component of the PRP19-CDC5L splicing complex composed of a core complex comprising a homotetramer of PRPF19, CDC5L, PLRG1 and BCAS2, and at least three less stably associated proteins CTNNBL1, CWC15 and HSPA8. Interacts directly with CWC15 and CDC5L in the complex. Interacts with AICDA; the interaction is important for the antibody diversification activity of AICDA. Interacts with PRPF31 (via its NLS). Interacts (via its N-terminal NLS) with KPNA1 and KPNA2. Widely expressed with highest levels in skeletal muscle, placenta, heart, spleen, testis and thyroid.

It localises to the nucleus. The protein resides in the cytoplasm. Its function is as follows. Component of the PRP19-CDC5L complex that forms an integral part of the spliceosome and is required for activating pre-mRNA splicing. Participates in AID/AICDA-mediated somatic hypermutation (SHM) and class-switch recombination (CSR), 2 processes resulting in the production of high-affinity, mutated isotype-switched antibodies. The chain is Beta-catenin-like protein 1 (CTNNBL1) from Homo sapiens (Human).